A 771-amino-acid polypeptide reads, in one-letter code: MQSAKPLFDYPKYWAECFGPAPFLPMSREEMDLLGWDSCDIIIVTGDAYVDHPSFGMAIIGRLLESQGFRVGIIAQPNWQSKDDFMKLGEPNLFFGVAAGNMDSMINRYTADKKIRSDDAYTPGGMAGKRPDRASLVYSQRCKEAYKHVPIVLGGIEASLRRIAHYDYWQDKVRNSILIDACADILLYGNAERAIVEVAQRLSYGHKIEDITDVRGTAFIRRDTPQGWYEVDSTRIDRPGKVDKIINPYVNTQDTQACAIEQEKGNVEDPNEAKVVQILASPRMTRDKTVIRLPSVEKVRNDAVLYAHANRVLHLETNPGNARALVQKHGEVDVWFNPPPIPMTTDEMDYVFGMPYARVPHPAYGKEKIPAYDMIRFSVNIMRGCFGGCTFCSITEHEGRIIQNRSEESIIREIEEIRDKVPGFTGVISDLGGPTANMYRIACKSPEIESACRKPSCVFPGICPNLNTDHSSLIQLYRSARALPGVKKILIASGLRYDLAVESPEYVKELVTHHVGGYLKIAPEHTEEGPLNQMMKPGIGSYDKFKRMFEKYTKEAGKEQYLIPYFIAAHPGTTDEDMMNLALWLKGNGFRADQVQAFYPSPMATATAMYHSGKNPLRKVTYKSDAVTIVKSEEQRRLHKAFLRYHDPKGWPMLRAALERMGRADLIGPGKDQLIPLHQPATDTYQSARRKNSTPAGSHKVGKDPKTTLIQTQHTGLPPRGSDGSKPWDKREEAKAAAMARNKQAAKERMDAAKGGKGKGGKPARKPVVPR.

The region spanning 371-649 (AYDMIRFSVN…KAFLRYHDPK (279 aa)) is the Radical SAM core domain. Residues cysteine 385, cysteine 389, and cysteine 392 each coordinate [4Fe-4S] cluster. Residues 683-771 (DTYQSARRKN…KPARKPVVPR (89 aa)) are disordered. Basic and acidic residues-rich tracts occupy residues 726-735 (KPWDKREEAK) and 745-754 (AAKERMDAAK). Residues 756–765 (GKGKGGKPAR) show a composition bias toward basic residues.

The protein belongs to the UPF0313 family. Requires [4Fe-4S] cluster as cofactor.

The protein is UPF0313 protein PSPTO_4928 of Pseudomonas syringae pv. tomato (strain ATCC BAA-871 / DC3000).